A 276-amino-acid polypeptide reads, in one-letter code: MKNWPLTTRSAFEKTGPIPRSISKTFEKLWKELDASAENEVMEEWRVARYQTVASLKYLLLLILIPVLVNQMSKSWIFGPLVDHVWSVNHADIFLNASQEERAFAQLQRFEERLHFDMLIGRLPTLSEEVIQQQIKNKALEIAYQYAQESAYAVKNVLADSASVASFLALMRFGKRQLSVFQSFVNEFIYGLSDTAKAFFIILFTDMFIGFHSPHGWEVLMEAVLRHFGLPENRDFIFLFIATFPVALDTVFKYWIFRYLNRVSPSAVATYHNMNE.

3 helical membrane-spanning segments follow: residues L59–G79, F199–V219, and F236–I256.

The protein belongs to the CemA family.

It localises to the plastid. The protein localises to the chloroplast inner membrane. It carries out the reaction K(+)(in) + H(+)(out) = K(+)(out) + H(+)(in). In terms of biological role, contributes to K(+)/H(+) antiport activity by supporting proton efflux to control proton extrusion and homeostasis in chloroplasts in a light-dependent manner to modulate photosynthesis. Prevents excessive induction of non-photochemical quenching (NPQ) under continuous-light conditions. Indirectly promotes efficient inorganic carbon uptake into chloroplasts. The protein is Potassium/proton antiporter CemA of Cyanidioschyzon merolae (strain NIES-3377 / 10D) (Unicellular red alga).